Consider the following 288-residue polypeptide: 4-diphosphocytidyl-2-C-methyl-D-erythritol kinase (288 aa).

Residue lysine 11 is part of the active site. 100–110 serves as a coordination point for ATP; that stretch reads PIAAGLGSGSS. Aspartate 140 is an active-site residue.

This sequence belongs to the GHMP kinase family. IspE subfamily.

The enzyme catalyses 4-CDP-2-C-methyl-D-erythritol + ATP = 4-CDP-2-C-methyl-D-erythritol 2-phosphate + ADP + H(+). It participates in isoprenoid biosynthesis; isopentenyl diphosphate biosynthesis via DXP pathway; isopentenyl diphosphate from 1-deoxy-D-xylulose 5-phosphate: step 3/6. Catalyzes the phosphorylation of the position 2 hydroxy group of 4-diphosphocytidyl-2C-methyl-D-erythritol. The sequence is that of 4-diphosphocytidyl-2-C-methyl-D-erythritol kinase from Wolbachia pipientis wMel.